The primary structure comprises 197 residues: 3-isopropylmalate dehydratase small subunit (197 aa).

This sequence belongs to the LeuD family. LeuD type 1 subfamily. In terms of assembly, heterodimer of LeuC and LeuD.

It catalyses the reaction (2R,3S)-3-isopropylmalate = (2S)-2-isopropylmalate. It participates in amino-acid biosynthesis; L-leucine biosynthesis; L-leucine from 3-methyl-2-oxobutanoate: step 2/4. Catalyzes the isomerization between 2-isopropylmalate and 3-isopropylmalate, via the formation of 2-isopropylmaleate. This chain is 3-isopropylmalate dehydratase small subunit, found in Mycobacterium sp. (strain JLS).